Reading from the N-terminus, the 77-residue chain is uncharacterized protein (77 aa).

In terms of domain architecture, Inhibitor I9 spans 5–74 (SYIVQLKDSV…FEPDQEMHTM (70 aa)).

This sequence belongs to the protease inhibitor I9 family.

It localises to the cytoplasm. It is found in the nucleus. This is an uncharacterized protein from Schizosaccharomyces pombe (strain 972 / ATCC 24843) (Fission yeast).